Here is a 351-residue protein sequence, read N- to C-terminus: Spindolin (351 aa).

Residues 1–20 form the signal peptide; the sequence is MNKFYYICIYINILYVCVSG.

In terms of assembly, homodimer; disulfide-linked.

Functionally, this protein is a spindle body protein. The sequence is that of Spindolin from Lepidoptera (butterflies and moths).